The sequence spans 429 residues: Histidinol dehydrogenase (429 aa).

NAD(+) is bound by residues Tyr127, Gln188, and Asn211. Residues Ser234, Gln256, and His259 each contribute to the substrate site. 2 residues coordinate Zn(2+): Gln256 and His259. Catalysis depends on proton acceptor residues Glu324 and His325. Positions 325, 358, 412, and 417 each coordinate substrate. Asp358 provides a ligand contact to Zn(2+). His417 lines the Zn(2+) pocket.

The protein belongs to the histidinol dehydrogenase family. The cofactor is Zn(2+).

It carries out the reaction L-histidinol + 2 NAD(+) + H2O = L-histidine + 2 NADH + 3 H(+). The protein operates within amino-acid biosynthesis; L-histidine biosynthesis; L-histidine from 5-phospho-alpha-D-ribose 1-diphosphate: step 9/9. Catalyzes the sequential NAD-dependent oxidations of L-histidinol to L-histidinaldehyde and then to L-histidine. The chain is Histidinol dehydrogenase from Bacillus cereus (strain ATCC 14579 / DSM 31 / CCUG 7414 / JCM 2152 / NBRC 15305 / NCIMB 9373 / NCTC 2599 / NRRL B-3711).